The primary structure comprises 550 residues: Gamma-aminobutyric acid receptor subunit beta (550 aa).

A signal peptide spans 1–24 (MRRSKTRRIFHVSITLLLVSTIFC). At 25-264 (QNGTKPHNNS…FQLRRSVGYF (240 aa)) the chain is on the extracellular side. Residues asparagine 26, asparagine 32, asparagine 33, asparagine 45, asparagine 53, and asparagine 193 are each glycosylated (N-linked (GlcNAc...) asparagine). Cysteine 180 and cysteine 194 form a disulfide bridge. The next 3 helical transmembrane spans lie at 265 to 285 (IFQT…SFWI), 292 to 311 (ARVA…STGV), and 324 to 344 (IDIY…EYAA). Over 345-527 (VNYSYWGRER…DVNLIDKYSR (183 aa)) the chain is Cytoplasmic. Residues 405 to 465 (AMSTSNTAAQ…TTSLKGARPH (61 aa)) form a disordered region. Over residues 406–421 (MSTSNTAAQNNNFEST) the composition is skewed to polar residues. A helical membrane pass occupies residues 528 to 548 (VVFPVCFIVFNLFYWSYYMMV).

The protein belongs to the ligand-gated ion channel (TC 1.A.9) family. Gamma-aminobutyric acid receptor (TC 1.A.9.5) subfamily.

Its subcellular location is the postsynaptic cell membrane. It is found in the cell membrane. Its function is as follows. GABA, an inhibitory neurotransmitter, mediates neuronal inhibition by binding to the GABA receptor and opening an integral chloride channel. The protein is Gamma-aminobutyric acid receptor subunit beta (gab-1) of Caenorhabditis elegans.